Consider the following 353-residue polypeptide: Photosystem II protein D1 (353 aa).

An N-acetylthreonine modification is found at T2. The residue at position 2 (T2) is a Phosphothreonine. Transmembrane regions (helical) follow at residues 29 to 46 (NIGW…TATS), 118 to 133 (HFLL…EWEL), and 142 to 156 (WIAV…AATA). H118 is a binding site for chlorophyll a. A pheophytin a-binding site is contributed by Y126. The [CaMn4O5] cluster site is built by D170 and E189. Residues 197–218 (FHMLGVAGVFGGSLFSAMHGSL) form a helical membrane-spanning segment. H198 contacts chlorophyll a. Residues H215 and 264–265 (SF) contribute to the a quinone site. A Fe cation-binding site is contributed by H215. Fe cation is bound at residue H272. The chain crosses the membrane as a helical span at residues 274-288 (FLAAWPVVGIWFTAL). The [CaMn4O5] cluster site is built by H332, E333, D342, and A344. The propeptide occupies 345–353 (AVEAPAVNG).

The protein belongs to the reaction center PufL/M/PsbA/D family. As to quaternary structure, PSII is composed of 1 copy each of membrane proteins PsbA, PsbB, PsbC, PsbD, PsbE, PsbF, PsbH, PsbI, PsbJ, PsbK, PsbL, PsbM, PsbT, PsbX, PsbY, PsbZ, Psb30/Ycf12, at least 3 peripheral proteins of the oxygen-evolving complex and a large number of cofactors. It forms dimeric complexes. The cofactor is The D1/D2 heterodimer binds P680, chlorophylls that are the primary electron donor of PSII, and subsequent electron acceptors. It shares a non-heme iron and each subunit binds pheophytin, quinone, additional chlorophylls, carotenoids and lipids. D1 provides most of the ligands for the Mn4-Ca-O5 cluster of the oxygen-evolving complex (OEC). There is also a Cl(-1) ion associated with D1 and D2, which is required for oxygen evolution. The PSII complex binds additional chlorophylls, carotenoids and specific lipids.. In terms of processing, tyr-161 forms a radical intermediate that is referred to as redox-active TyrZ, YZ or Y-Z. C-terminally processed by CTPA; processing is essential to allow assembly of the oxygen-evolving complex and thus photosynthetic growth.

It is found in the plastid. Its subcellular location is the chloroplast thylakoid membrane. It catalyses the reaction 2 a plastoquinone + 4 hnu + 2 H2O = 2 a plastoquinol + O2. In terms of biological role, photosystem II (PSII) is a light-driven water:plastoquinone oxidoreductase that uses light energy to abstract electrons from H(2)O, generating O(2) and a proton gradient subsequently used for ATP formation. It consists of a core antenna complex that captures photons, and an electron transfer chain that converts photonic excitation into a charge separation. The D1/D2 (PsbA/PsbD) reaction center heterodimer binds P680, the primary electron donor of PSII as well as several subsequent electron acceptors. The protein is Photosystem II protein D1 of Dumortiera hirsuta (Liverwort).